We begin with the raw amino-acid sequence, 273 residues long: Imidazole glycerol phosphate synthase subunit HisF (273 aa).

Active-site residues include D11 and D134.

The protein belongs to the HisA/HisF family. Heterodimer of HisH and HisF.

It localises to the cytoplasm. The catalysed reaction is 5-[(5-phospho-1-deoxy-D-ribulos-1-ylimino)methylamino]-1-(5-phospho-beta-D-ribosyl)imidazole-4-carboxamide + L-glutamine = D-erythro-1-(imidazol-4-yl)glycerol 3-phosphate + 5-amino-1-(5-phospho-beta-D-ribosyl)imidazole-4-carboxamide + L-glutamate + H(+). Its pathway is amino-acid biosynthesis; L-histidine biosynthesis; L-histidine from 5-phospho-alpha-D-ribose 1-diphosphate: step 5/9. Functionally, IGPS catalyzes the conversion of PRFAR and glutamine to IGP, AICAR and glutamate. The HisF subunit catalyzes the cyclization activity that produces IGP and AICAR from PRFAR using the ammonia provided by the HisH subunit. This chain is Imidazole glycerol phosphate synthase subunit HisF, found in Methanocella arvoryzae (strain DSM 22066 / NBRC 105507 / MRE50).